A 292-amino-acid chain; its full sequence is NAD kinase (292 aa).

Aspartate 73 serves as the catalytic Proton acceptor. NAD(+) is bound by residues 73–74, 147–148, histidine 158, arginine 175, aspartate 177, 188–193, and glutamine 247; these read DG, NE, and TAYSLS.

The protein belongs to the NAD kinase family. A divalent metal cation serves as cofactor.

Its subcellular location is the cytoplasm. The enzyme catalyses NAD(+) + ATP = ADP + NADP(+) + H(+). Involved in the regulation of the intracellular balance of NAD and NADP, and is a key enzyme in the biosynthesis of NADP. Catalyzes specifically the phosphorylation on 2'-hydroxyl of the adenosine moiety of NAD to yield NADP. The sequence is that of NAD kinase from Salmonella dublin (strain CT_02021853).